Here is a 341-residue protein sequence, read N- to C-terminus: L-threonine 3-dehydrogenase (341 aa).

Cysteine 38 lines the Zn(2+) pocket. Residues threonine 40 and histidine 43 each act as charge relay system in the active site. 6 residues coordinate Zn(2+): histidine 63, glutamate 64, cysteine 93, cysteine 96, cysteine 99, and cysteine 107. Residues isoleucine 175, aspartate 195, arginine 200, 262–264 (LGI), and 286–287 (IY) contribute to the NAD(+) site.

The protein belongs to the zinc-containing alcohol dehydrogenase family. As to quaternary structure, homotetramer. The cofactor is Zn(2+).

The protein localises to the cytoplasm. The enzyme catalyses L-threonine + NAD(+) = (2S)-2-amino-3-oxobutanoate + NADH + H(+). It participates in amino-acid degradation; L-threonine degradation via oxydo-reductase pathway; glycine from L-threonine: step 1/2. Catalyzes the NAD(+)-dependent oxidation of L-threonine to 2-amino-3-ketobutyrate. The protein is L-threonine 3-dehydrogenase of Solibacter usitatus (strain Ellin6076).